The primary structure comprises 334 residues: GTP 3',8-cyclase (334 aa).

Positions 13-239 constitute a Radical SAM core domain; sequence RFHRKFYYLR…KVKAANDGPA (227 aa). Residue arginine 22 participates in GTP binding. [4Fe-4S] cluster is bound by residues cysteine 29 and cysteine 33. Position 35 (tyrosine 35) interacts with S-adenosyl-L-methionine. Position 36 (cysteine 36) interacts with [4Fe-4S] cluster. Arginine 73 provides a ligand contact to GTP. Position 77 (glycine 77) interacts with S-adenosyl-L-methionine. Threonine 104 is a binding site for GTP. Serine 128 is an S-adenosyl-L-methionine binding site. GTP is bound at residue lysine 165. Methionine 199 lines the S-adenosyl-L-methionine pocket. The [4Fe-4S] cluster site is built by cysteine 262 and cysteine 265. Residue 267–269 participates in GTP binding; it reads RLR. Cysteine 279 is a [4Fe-4S] cluster binding site.

It belongs to the radical SAM superfamily. MoaA family. In terms of assembly, monomer and homodimer. It depends on [4Fe-4S] cluster as a cofactor.

The enzyme catalyses GTP + AH2 + S-adenosyl-L-methionine = (8S)-3',8-cyclo-7,8-dihydroguanosine 5'-triphosphate + 5'-deoxyadenosine + L-methionine + A + H(+). It functions in the pathway cofactor biosynthesis; molybdopterin biosynthesis. Its function is as follows. Catalyzes the cyclization of GTP to (8S)-3',8-cyclo-7,8-dihydroguanosine 5'-triphosphate. This chain is GTP 3',8-cyclase, found in Vibrio vulnificus (strain YJ016).